A 406-amino-acid polypeptide reads, in one-letter code: MKRSIILVLDSFGIGATEDAVDFGDVGSNTMGHIAQACARGEADNGDRSGPLHLPNLNKLGLGKACEESSGYFPEGLDPNVEITGAYGHAKELSSGKDTPSGHWEIAGVPVLFDWGYFSDHDNSFPKELTDRILKRANLPGFLGNCHASGTHVLDELGEEHMKTGMPIFYTSADSVFQIACHEETFGLDNLLTLCQIAREELEDYNIGRVIARPFTGPGKGQFERTGNRRDLSLEPPATTVLQKLVDEKGGDVISIGKISDIYAGCGITKKVKANGIPALFEATLEQIKQAGDNSLVFTNFVDFDSAYGHRRNVAGYAAALEYFDKRLPEVLELLQEDDVLILTADHGCDPTWEGTDHTREHIPVIVTGPKIPAGSLGRRETFADIGQSLAEYYGTSDMEYGKSFL.

Mn(2+)-binding residues include Asp10, Asp305, His310, Asp346, His347, and His358.

It belongs to the phosphopentomutase family. It depends on Mn(2+) as a cofactor.

The protein resides in the cytoplasm. It carries out the reaction 2-deoxy-alpha-D-ribose 1-phosphate = 2-deoxy-D-ribose 5-phosphate. The catalysed reaction is alpha-D-ribose 1-phosphate = D-ribose 5-phosphate. It functions in the pathway carbohydrate degradation; 2-deoxy-D-ribose 1-phosphate degradation; D-glyceraldehyde 3-phosphate and acetaldehyde from 2-deoxy-alpha-D-ribose 1-phosphate: step 1/2. In terms of biological role, isomerase that catalyzes the conversion of deoxy-ribose 1-phosphate (dRib-1-P) and ribose 1-phosphate (Rib-1-P) to deoxy-ribose 5-phosphate (dRib-5-P) and ribose 5-phosphate (Rib-5-P), respectively. The protein is Phosphopentomutase of Photobacterium profundum (strain SS9).